A 126-amino-acid chain; its full sequence is Small ribosomal subunit protein uS13 (126 aa).

Residues 95-126 (GLPVRGQRTQTNARTRKGKKKTVAGKKKAGRK) form a disordered region. The span at 108 to 126 (RTRKGKKKTVAGKKKAGRK) shows a compositional bias: basic residues.

The protein belongs to the universal ribosomal protein uS13 family. Part of the 30S ribosomal subunit. Forms a loose heterodimer with protein S19. Forms two bridges to the 50S subunit in the 70S ribosome.

Functionally, located at the top of the head of the 30S subunit, it contacts several helices of the 16S rRNA. In the 70S ribosome it contacts the 23S rRNA (bridge B1a) and protein L5 of the 50S subunit (bridge B1b), connecting the 2 subunits; these bridges are implicated in subunit movement. Contacts the tRNAs in the A and P-sites. The protein is Small ribosomal subunit protein uS13 of Thermobifida fusca (strain YX).